A 251-amino-acid polypeptide reads, in one-letter code: Large ribosomal subunit protein uL4 (251 aa).

It belongs to the universal ribosomal protein uL4 family. Part of the 50S ribosomal subunit.

In terms of biological role, one of the primary rRNA binding proteins, this protein initially binds near the 5'-end of the 23S rRNA. It is important during the early stages of 50S assembly. It makes multiple contacts with different domains of the 23S rRNA in the assembled 50S subunit and ribosome. Forms part of the polypeptide exit tunnel. This chain is Large ribosomal subunit protein uL4, found in Methanothrix thermoacetophila (strain DSM 6194 / JCM 14653 / NBRC 101360 / PT) (Methanosaeta thermophila).